An 834-amino-acid polypeptide reads, in one-letter code: Probable basic-leucine zipper transcription factor D (834 aa).

Residues 83–160 (NNNNMLNDHS…SNNNSSSEGE (78 aa)) form a disordered region. Positions 90–111 (DHSSSPMRVPNSSPSLYNNSIE) are enriched in polar residues. The segment covering 119–157 (DNSNNNNNNNNNINVNDINVNDINSNSTNNNESNNNSSS) has biased composition (low complexity). The stretch at 211-246 (SEQQQQQQQQQQQQQQQQQQQQQQQQQHQHLLQEHQ) forms a coiled coil. Positions 378–405 (VVDPPTHNQEDERNVKKQRRLIKNRESA) are disordered. Positions 391-454 (NVKKQRRLIK…KQLAAQNSNS (64 aa)) constitute a bZIP domain. The tract at residues 393-402 (KKQRRLIKNR) is basic motif. Residues 407 to 414 (LSRMRKKI) form a leucine-zipper region. 2 disordered regions span residues 455 to 504 (NNNS…QQQS) and 550 to 712 (LSMS…KTPQ). The span at 550 to 595 (LSMSDSESSPQKSLRLSSNHHSLPDGTFNTIPIDQQTTATTNTKSL) shows a compositional bias: polar residues. 2 stretches are compositionally biased toward low complexity: residues 616–651 (NNNN…NNNN) and 694–707 (TTTT…TTST).

The protein belongs to the bZIP family.

Its subcellular location is the nucleus. Its function is as follows. Probable transcriptional regulator. The protein is Probable basic-leucine zipper transcription factor D (bzpD) of Dictyostelium discoideum (Social amoeba).